Consider the following 122-residue polypeptide: Large ribosomal subunit protein uL14 (122 aa).

Belongs to the universal ribosomal protein uL14 family. Part of the 50S ribosomal subunit. Forms a cluster with proteins L3 and L19. In the 70S ribosome, L14 and L19 interact and together make contacts with the 16S rRNA in bridges B5 and B8.

Binds to 23S rRNA. Forms part of two intersubunit bridges in the 70S ribosome. This is Large ribosomal subunit protein uL14 from Streptococcus pneumoniae (strain JJA).